A 765-amino-acid chain; its full sequence is Zinc metalloproteinase nas-37 (765 aa).

A signal peptide spans 1 to 22 (MKSQACLKVCLALIGLVSIVST). A propeptide spanning residues 23–114 (AYIANDVVSD…SESNSPRSRR (92 aa)) is cleaved from the precursor. A Peptidase M12A domain is found at 115–308 (QAHPDPRNFW…AKMINTRYCS (194 aa)). N-linked (GlcNAc...) asparagine glycosylation is present at asparagine 126. Intrachain disulfides connect cysteine 156/cysteine 307, cysteine 177/cysteine 196, cysteine 311/cysteine 331, cysteine 333/cysteine 342, cysteine 350/cysteine 374, and cysteine 400/cysteine 420. Histidine 204 serves as a coordination point for Zn(2+). Glutamate 205 is an active-site residue. The Zn(2+) site is built by histidine 208 and histidine 214. In terms of domain architecture, EGF-like spans 303 to 343 (NTRYCSNVCQRSLPCLNEGYTDPNNCGRCRCPSGYGGTYCE). Positions 350-458 (CGGSLTASSS…RGFTLKYRAI (109 aa)) constitute a CUB domain. Positions 513 to 573 (KYSSEELYDP…TRPTPTTTVA (61 aa)) are disordered. Low complexity-rich tracts occupy residues 526–545 (LSPS…DASP) and 562–573 (ALTRPTPTTTVA). A TSP type-1 domain is found at 576 to 627 (TASWSAWGEWSACSQPCGGCGTKTRVRACYGGNQVCPGSNLDRESCNAHACA). Disulfide bonds link cysteine 588/cysteine 621, cysteine 592/cysteine 626, and cysteine 604/cysteine 611.

Requires Zn(2+) as cofactor. Expressed in hypodermal cells. Not expressed in the seam cells in L1 to L3 larvae, but it is present in seam cells of L4 larvae. Also expressed in attachment points of the cuticle at the anterior end of larvae, in the arcade cells in the mouth, the anterior pharynx, the amphid socket cells, and in the rectal epithelial cells at the posterior end of the larvae (at protein level).

It is found in the secreted. Its function is as follows. Metalloprotease. Plays an essential role in molting, a process during larval stages in which a new cuticle is formed and the old cuticle is shed. Required during ecdysis, the opening of the cuticle to allow the worm to escape. The chain is Zinc metalloproteinase nas-37 (nas-37) from Caenorhabditis elegans.